A 178-amino-acid chain; its full sequence is Glucagon-2 (178 aa).

A signal peptide spans 1 to 21 (MFGIHSLAGVLLLVIVQSQLA). 3 consecutive propeptides follow at residues 83–87 (SGAPS), 123–134 (ESAEESMNGPMS), and 171–178 (SNKRQEDH).

Belongs to the glucagon family.

Its subcellular location is the secreted. In terms of biological role, promotes hydrolysis of glycogen and lipids, and raises the blood sugar level. The protein is Glucagon-2 (gcg2) of Oncorhynchus mykiss (Rainbow trout).